The primary structure comprises 341 residues: Zinc transporter ZIP11 (341 aa).

The next 7 membrane-spanning stretches (helical) occupy residues 12–32, 44–64, 72–92, 193–213, 262–284, 289–306, and 321–341; these read LLGT…VFVF, LGFA…APAV, GFGS…AAFV, IALL…AVGV, FWYG…FAVV, ILPY…YVIM, and LASW…VGLG.

Belongs to the ZIP transporter (TC 2.A.5) family.

The protein localises to the cell membrane. Its subcellular location is the nucleus. The protein resides in the cytoplasm. It is found in the golgi apparatus. It carries out the reaction Zn(2+)(in) = Zn(2+)(out). The enzyme catalyses Cu(2+)(in) = Cu(2+)(out). Functionally, zinc importer that regulates cytosolic zinc concentrations either via zinc influx from the extracellular compartment or efflux from intracellular organelles such as Golgi apparatus. May transport copper ions as well. The transport mechanism remains to be elucidated. In Bos taurus (Bovine), this protein is Zinc transporter ZIP11 (SLC39A11).